We begin with the raw amino-acid sequence, 319 residues long: Tetrahydromethanopterin S-methyltransferase subunit H (319 aa).

Belongs to the MtrH family. As to quaternary structure, the complex is composed of 8 subunits; MtrA, MtrB, MtrC, MtrD, MtrE, MtrF, MtrG and MtrH.

The enzyme catalyses 5-methyl-5,6,7,8-tetrahydromethanopterin + coenzyme M + 2 Na(+)(in) = 5,6,7,8-tetrahydromethanopterin + methyl-coenzyme M + 2 Na(+)(out). It functions in the pathway one-carbon metabolism; methanogenesis from CO(2); methyl-coenzyme M from 5,10-methylene-5,6,7,8-tetrahydromethanopterin: step 2/2. Its function is as follows. Part of a complex that catalyzes the formation of methyl-coenzyme M and tetrahydromethanopterin from coenzyme M and methyl-tetrahydromethanopterin. This is an energy-conserving, sodium-ion translocating step. MtrH catalyzes the transfer of the methyl group from methyl-tetrahydromethanopterin to the corrinoid prosthetic group of MtrA. This Methanocaldococcus jannaschii (strain ATCC 43067 / DSM 2661 / JAL-1 / JCM 10045 / NBRC 100440) (Methanococcus jannaschii) protein is Tetrahydromethanopterin S-methyltransferase subunit H.